Here is a 499-residue protein sequence, read N- to C-terminus: Alpha-amylase A type-3 (499 aa).

The signal sequence occupies residues Met-1–Ala-21. A disulfide bridge links Cys-51 with Cys-59. Position 104 (Trp-104) interacts with substrate. Residue Asn-142 participates in Ca(2+) binding. Position 143 (His-143) interacts with substrate. A disulfide bridge connects residues Cys-171 and Cys-185. Ca(2+) contacts are provided by Glu-183 and Asp-196. An N-linked (GlcNAc...) asparagine glycan is attached at Asn-218. Arg-225 is a binding site for substrate. Asp-227, His-231, and Glu-251 together coordinate Ca(2+). Asp-227 (nucleophile) is an active-site residue. Residue Lys-230–His-231 coordinates substrate. Glu-251 (proton donor) is an active-site residue. Residue Gly-255 coordinates substrate. A disulfide bridge links Cys-261 with Cys-304. Arg-365 provides a ligand contact to substrate. A disulfide bridge links Cys-461 with Cys-496.

Belongs to the glycosyl hydrolase 13 family. Monomer. Ca(2+) serves as cofactor.

It is found in the secreted. It carries out the reaction Endohydrolysis of (1-&gt;4)-alpha-D-glucosidic linkages in polysaccharides containing three or more (1-&gt;4)-alpha-linked D-glucose units.. The protein is Alpha-amylase A type-3 (amy3) of Aspergillus oryzae (strain ATCC 42149 / RIB 40) (Yellow koji mold).